The sequence spans 115 residues: uncharacterized protein (115 aa).

An N-terminal signal peptide occupies residues 1–20; the sequence is MKTFFRTVLFGSLMAVCANS.

This is an uncharacterized protein from Escherichia coli O6:H1 (strain CFT073 / ATCC 700928 / UPEC).